The chain runs to 125 residues: Large ribosomal subunit protein bL21 (125 aa).

This sequence belongs to the bacterial ribosomal protein bL21 family. Part of the 50S ribosomal subunit. Contacts protein L20.

Functionally, this protein binds to 23S rRNA in the presence of protein L20. In Synechococcus sp. (strain CC9311), this protein is Large ribosomal subunit protein bL21.